Reading from the N-terminus, the 333-residue chain is Delta-aminolevulinic acid dehydratase (333 aa).

Residues Cys127, Cys129, and Cys137 each contribute to the Zn(2+) site. The active-site Schiff-base intermediate with substrate is the Lys204. 5-aminolevulinate is bound by residues Arg214 and Arg226. Residue Lys257 is the Schiff-base intermediate with substrate of the active site. Positions 283 and 322 each coordinate 5-aminolevulinate.

This sequence belongs to the ALAD family. Homooctamer. Zn(2+) is required as a cofactor.

The enzyme catalyses 2 5-aminolevulinate = porphobilinogen + 2 H2O + H(+). Its pathway is porphyrin-containing compound metabolism; protoporphyrin-IX biosynthesis; coproporphyrinogen-III from 5-aminolevulinate: step 1/4. Catalyzes an early step in the biosynthesis of tetrapyrroles. Binds two molecules of 5-aminolevulinate per subunit, each at a distinct site, and catalyzes their condensation to form porphobilinogen. This chain is Delta-aminolevulinic acid dehydratase (alad), found in Dictyostelium discoideum (Social amoeba).